A 269-amino-acid chain; its full sequence is Diaminopimelate epimerase (269 aa).

Positions 15, 49, and 66 each coordinate substrate. Cys75 serves as the catalytic Proton donor. Substrate is bound by residues 76-77 (GN), Asn155, Asn187, and 204-205 (ER). Cys213 acts as the Proton acceptor in catalysis. 214-215 (GS) lines the substrate pocket.

The protein belongs to the diaminopimelate epimerase family. Homodimer.

The protein resides in the cytoplasm. The catalysed reaction is (2S,6S)-2,6-diaminopimelate = meso-2,6-diaminopimelate. It functions in the pathway amino-acid biosynthesis; L-lysine biosynthesis via DAP pathway; DL-2,6-diaminopimelate from LL-2,6-diaminopimelate: step 1/1. In terms of biological role, catalyzes the stereoinversion of LL-2,6-diaminopimelate (L,L-DAP) to meso-diaminopimelate (meso-DAP), a precursor of L-lysine and an essential component of the bacterial peptidoglycan. The protein is Diaminopimelate epimerase of Rickettsia bellii (strain OSU 85-389).